The following is a 564-amino-acid chain: Dicarboxylate transporter 2, chloroplastic (564 aa).

Residues Met1 to Thr22 constitute a chloroplast transit peptide. The tract at residues Arg35–His58 is disordered. The span at Leu39–His58 shows a compositional bias: low complexity. Helical transmembrane passes span Gly94 to Val114, Leu127 to Ala147, Thr166 to Ala186, Ala235 to Gly255, Leu262 to Leu282, Val307 to Ile327, Val356 to Phe376, Ile380 to Val400, Thr415 to Val435, Leu451 to Phe471, Ala484 to Ala504, and Met538 to Trp558.

This sequence belongs to the SLC13A/DASS transporter (TC 2.A.47) family. DIT1 subfamily. As to expression, expressed in leaves.

The protein localises to the plastid. It localises to the chloroplast inner membrane. Glutamate/malate translocator involved with DIT1 in primary ammonia assimilation and in the re-assimilation of ammonia generated by the photorespiratory pathway. Exports the end product of ammonia assimilation, glutamate, from plastids to the cytosol. The precursor for ammonia assimilation, 2-oxoglutarate, is imported from the cytosol by DIT1. The polypeptide is Dicarboxylate transporter 2, chloroplastic (DIT2) (Spinacia oleracea (Spinach)).